A 243-amino-acid polypeptide reads, in one-letter code: Aliphatic sulfonates import ATP-binding protein SsuB (243 aa).

The ABC transporter domain maps to 11-230; that stretch reads ATVRGLRKSY…RTHPSFASYT (220 aa). 43 to 50 contributes to the ATP binding site; sequence GRSGSGKS.

This sequence belongs to the ABC transporter superfamily. Aliphatic sulfonates importer (TC 3.A.1.17.2) family. The complex is composed of two ATP-binding proteins (SsuB), two transmembrane proteins (SsuC) and a solute-binding protein (SsuA).

It localises to the cell membrane. The catalysed reaction is ATP + H2O + aliphatic sulfonate-[sulfonate-binding protein]Side 1 = ADP + phosphate + aliphatic sulfonateSide 2 + [sulfonate-binding protein]Side 1.. In terms of biological role, part of the ABC transporter complex SsuABC involved in aliphatic sulfonates import. Responsible for energy coupling to the transport system. Is also involved in taurine transport. Seems to not be involved in long chain aliphatic sulfonates transport (chain length of eight carbon atoms or more). This is Aliphatic sulfonates import ATP-binding protein SsuB from Corynebacterium glutamicum (strain ATCC 13032 / DSM 20300 / JCM 1318 / BCRC 11384 / CCUG 27702 / LMG 3730 / NBRC 12168 / NCIMB 10025 / NRRL B-2784 / 534).